A 698-amino-acid polypeptide reads, in one-letter code: DNA ligase (698 aa).

NAD(+)-binding positions include 40 to 44 (DGEYD), 89 to 90 (SL), and Glu-123. Lys-125 serves as the catalytic N6-AMP-lysine intermediate. Positions 146, 184, 300, and 324 each coordinate NAD(+). The Zn(2+) site is built by Cys-418, Cys-421, Cys-436, and Cys-442. The region spanning 620–698 (AGDSPLAGKT…EAEFRAMSGG (79 aa)) is the BRCT domain.

Belongs to the NAD-dependent DNA ligase family. LigA subfamily. The cofactor is Mg(2+). It depends on Mn(2+) as a cofactor.

It catalyses the reaction NAD(+) + (deoxyribonucleotide)n-3'-hydroxyl + 5'-phospho-(deoxyribonucleotide)m = (deoxyribonucleotide)n+m + AMP + beta-nicotinamide D-nucleotide.. DNA ligase that catalyzes the formation of phosphodiester linkages between 5'-phosphoryl and 3'-hydroxyl groups in double-stranded DNA using NAD as a coenzyme and as the energy source for the reaction. It is essential for DNA replication and repair of damaged DNA. The sequence is that of DNA ligase from Rhodospirillum rubrum (strain ATCC 11170 / ATH 1.1.1 / DSM 467 / LMG 4362 / NCIMB 8255 / S1).